We begin with the raw amino-acid sequence, 240 residues long: MSLNKTIYEGKAKAIIETEDSSTVIQHFKDDVTAFNKEKYEIIESKGIINNHISAFIMEKLEKAEISTHFIKTLNEREQLVKKLKIIPLEVVVRNVAAGSFCKRFNIKEGERLASPIIDFFYKNDDLADPMVSENHILYFDWLSSKEMDEVKTTTLKINEILVHLFSNASIYLVDLKLEFGRLINDSTKIVLADEISPDNCRLWDKNTYKKLDKDVFRLNLGDLKEAYLEVAKRLSVKLG.

Belongs to the SAICAR synthetase family.

The catalysed reaction is 5-amino-1-(5-phospho-D-ribosyl)imidazole-4-carboxylate + L-aspartate + ATP = (2S)-2-[5-amino-1-(5-phospho-beta-D-ribosyl)imidazole-4-carboxamido]succinate + ADP + phosphate + 2 H(+). It participates in purine metabolism; IMP biosynthesis via de novo pathway; 5-amino-1-(5-phospho-D-ribosyl)imidazole-4-carboxamide from 5-amino-1-(5-phospho-D-ribosyl)imidazole-4-carboxylate: step 1/2. The chain is Phosphoribosylaminoimidazole-succinocarboxamide synthase from Wolbachia sp. subsp. Drosophila simulans (strain wRi).